The chain runs to 218 residues: MMP 1-O-methyltransferase (218 aa).

Residues Phe20, Gly46, Ser52, Asp71, Gly75, and Ser124 each contribute to the S-adenosyl-L-methionine site. Asp141 lines the Mg(2+) pocket. Residue His144 is the Proton acceptor of the active site. Arg151 is a binding site for S-adenosyl-L-methionine. Residues His169 and Asp170 each contribute to the Mg(2+) site.

It belongs to the methyltransferase superfamily. In terms of assembly, homodimer. Requires Mg(2+) as cofactor.

It carries out the reaction 3,3'-di-O-methyl-4alpha-mannobiose + S-adenosyl-L-methionine = 1,3,3'-tri-O-methyl-4alpha-mannobiose + S-adenosyl-L-homocysteine + H(+). With respect to regulation, inhibited by EDTA. Its function is as follows. Involved in the biosynthesis of 3-O-methylmannose polysaccharides (MMP), which are intracellular polymethylated polysaccharides implicated in the modulation of fatty acid metabolism in non-tuberculous mycobacteria. Specifically methylates the 1-OH position of 3,3'-di-O-methyl-4alpha-mannobiose, a probable early precursor of MMP, yielding the reducing end dimannoside of MMP. This is MMP 1-O-methyltransferase from Mycolicibacterium hassiacum (strain DSM 44199 / CIP 105218 / JCM 12690 / 3849) (Mycobacterium hassiacum).